A 151-amino-acid chain; its full sequence is Globin (151 aa).

One can recognise a Globin domain in the interval 2-151; it reads SLSDADKKAL…AAFNETLKKA (150 aa). Residue His-100 participates in heme b binding.

The protein belongs to the globin family.

In Biomphalaria glabrata (Bloodfluke planorb), this protein is Globin.